The following is a 198-amino-acid chain: Pyridoxal 5'-phosphate synthase subunit PdxT (198 aa).

50 to 52 (GES) is an L-glutamine binding site. Cys82 (nucleophile) is an active-site residue. Residues Arg111 and 140-141 (IR) contribute to the L-glutamine site. Active-site charge relay system residues include His177 and Glu179.

The protein belongs to the glutaminase PdxT/SNO family. In terms of assembly, in the presence of PdxS, forms a dodecamer of heterodimers. Only shows activity in the heterodimer.

It catalyses the reaction aldehydo-D-ribose 5-phosphate + D-glyceraldehyde 3-phosphate + L-glutamine = pyridoxal 5'-phosphate + L-glutamate + phosphate + 3 H2O + H(+). The catalysed reaction is L-glutamine + H2O = L-glutamate + NH4(+). The protein operates within cofactor biosynthesis; pyridoxal 5'-phosphate biosynthesis. Catalyzes the hydrolysis of glutamine to glutamate and ammonia as part of the biosynthesis of pyridoxal 5'-phosphate. The resulting ammonia molecule is channeled to the active site of PdxS. The chain is Pyridoxal 5'-phosphate synthase subunit PdxT from Leifsonia xyli subsp. xyli (strain CTCB07).